We begin with the raw amino-acid sequence, 464 residues long: tRNA modification GTPase MnmE (464 aa).

(6S)-5-formyl-5,6,7,8-tetrahydrofolate-binding residues include Arg28, Glu90, and Arg129. The 160-residue stretch at 226 to 385 (GLATAIVGRP…LEEKIAELFF (160 aa)) folds into the TrmE-type G domain. Residue Asn236 coordinates K(+). GTP-binding positions include 236 to 241 (NVGKSS), 255 to 261 (TDIAGTT), and 280 to 283 (DTAG). Ser240 provides a ligand contact to Mg(2+). Residues Thr255, Ile257, and Thr260 each contribute to the K(+) site. Thr261 contacts Mg(2+). A (6S)-5-formyl-5,6,7,8-tetrahydrofolate-binding site is contributed by Lys464.

It belongs to the TRAFAC class TrmE-Era-EngA-EngB-Septin-like GTPase superfamily. TrmE GTPase family. As to quaternary structure, homodimer. Heterotetramer of two MnmE and two MnmG subunits. The cofactor is K(+).

It is found in the cytoplasm. Its function is as follows. Exhibits a very high intrinsic GTPase hydrolysis rate. Involved in the addition of a carboxymethylaminomethyl (cmnm) group at the wobble position (U34) of certain tRNAs, forming tRNA-cmnm(5)s(2)U34. The chain is tRNA modification GTPase MnmE from Ligilactobacillus salivarius (strain UCC118) (Lactobacillus salivarius).